The following is a 69-amino-acid chain: MKLSETKSLLKDLRALSVEELTTREAELKKELFDLRFQAAAGRLENTAKLDEVKKTIARVKTVQAELNK.

This sequence belongs to the universal ribosomal protein uL29 family.

The sequence is that of Large ribosomal subunit protein uL29 (rpmC) from Lactococcus lactis subsp. lactis (strain IL1403) (Streptococcus lactis).